Consider the following 409-residue polypeptide: MSMMLSNWALSPRYVGQRNLIHCTTLFHTLTRWAKDADDKYHDINSMYENMFTPSNDNVSILQDEGKSDYDTTKTSSMQEDISAFNKDLYNFYNIGYAKQIMSASQLENIVKAKGRFVIQSLSTSPYYNLALENYVFKNTPRAKRGPDNCRLLFYINDRCAVIGKNQNLWQEVDLAKLKSKNFELLRRFSGGGTVLHDLGNVNYSYLTSREKFETKFFNKMIIKWLNSLNPELRLDLNERGDIIQDGFKISGSAYKIAGGKAYHHATMLLNADLEQFSGLLEPSLPNNMEWESSGVHSVKSKIKNVGIITPNQFIAVVSERFQKTFKVDGEIPIYYCDEFKSINDEIKDAMNTLQSEQWKYFSGPKFSVKIKDKGLTIKVEKGMIYDCDRNDLIGLEFKGFLENIDSYT.

One can recognise a BPL/LPL catalytic domain in the interval 146 to 330 (GPDNCRLLFY…RFQKTFKVDG (185 aa)). Residues Arg188, 193-196 (GTVL), and Lys249 each bind ATP. Residue Lys249 coordinates (R)-lipoate.

This sequence belongs to the LplA family. Monomer.

It carries out the reaction L-lysyl-[lipoyl-carrier protein] + (R)-lipoate + ATP = N(6)-[(R)-lipoyl]-L-lysyl-[lipoyl-carrier protein] + AMP + diphosphate + H(+). Its pathway is protein modification; protein lipoylation via exogenous pathway; protein N(6)-(lipoyl)lysine from lipoate: step 1/2. It functions in the pathway protein modification; protein lipoylation via exogenous pathway; protein N(6)-(lipoyl)lysine from lipoate: step 2/2. In terms of biological role, catalyzes both the ATP-dependent activation of exogenously supplied lipoate to lipoyl-AMP and the transfer of the activated lipoyl onto the lipoyl domains of lipoate-dependent enzymes. This Saccharomyces cerevisiae (strain RM11-1a) (Baker's yeast) protein is Putative lipoate-protein ligase A (AIM22).